The sequence spans 643 residues: Asparagine synthetase domain-containing protein 1 (643 aa).

The active-site For GATase activity is Cys-2. In terms of domain architecture, Glutamine amidotransferase type-2 spans 2-184 (CGICCSVNFS…ASGLFRIDLK (183 aa)). Residues 285–601 (QFIDVLSVAV…GLTASALLPK (317 aa)) enclose the Asparagine synthetase domain.

In Homo sapiens (Human), this protein is Asparagine synthetase domain-containing protein 1 (ASNSD1).